The primary structure comprises 465 residues: UDP-glucose:undecaprenyl-phosphate glucose-1-phosphate transferase (465 aa).

Helical transmembrane passes span F23 to F43, L46 to T66, I82 to F102, F105 to V125, and I280 to A300.

The protein belongs to the bacterial sugar transferase family.

The protein resides in the cell inner membrane. The catalysed reaction is di-trans,octa-cis-undecaprenyl phosphate + UDP-alpha-D-glucose = alpha-D-glucosyl di-trans,octa-cis-undecaprenyl diphosphate + UMP. The protein operates within capsule biogenesis; capsule polysaccharide biosynthesis. Is likely the initiating enzyme for the K2 capsular polysaccharide synthesis. Catalyzes the transfer of the glucose-1-phosphate moiety from UDP-Glc onto the carrier lipid undecaprenyl phosphate (C55-P), forming a phosphoanhydride bond yielding to glucosyl-pyrophosphoryl-undecaprenol (Glc-PP-C55). In Klebsiella pneumoniae, this protein is UDP-glucose:undecaprenyl-phosphate glucose-1-phosphate transferase.